A 603-amino-acid chain; its full sequence is Sulfoacetaldehyde acetyltransferase (603 aa).

Belongs to the TPP enzyme family. Homodimer or homotetramer. Mg(2+) serves as cofactor. Requires thiamine diphosphate as cofactor.

It is found in the cytoplasm. It catalyses the reaction acetyl phosphate + sulfite + H(+) = sulfoacetaldehyde + phosphate. Its pathway is organosulfur degradation; taurine degradation via aerobic pathway; acetyl phosphate and sulfite from taurine: step 2/2. The chain is Sulfoacetaldehyde acetyltransferase (xsc) from Alcaligenes xylosoxydans xylosoxydans (Achromobacter xylosoxidans).